Consider the following 278-residue polypeptide: 4-deoxy-L-threo-5-hexosulose-uronate ketol-isomerase (278 aa).

Residues histidine 196, histidine 198, glutamate 203, and histidine 245 each coordinate Zn(2+).

The protein belongs to the KduI family. Requires Zn(2+) as cofactor.

It carries out the reaction 5-dehydro-4-deoxy-D-glucuronate = 3-deoxy-D-glycero-2,5-hexodiulosonate. It functions in the pathway glycan metabolism; pectin degradation; 2-dehydro-3-deoxy-D-gluconate from pectin: step 4/5. In terms of biological role, catalyzes the isomerization of 5-dehydro-4-deoxy-D-glucuronate to 3-deoxy-D-glycero-2,5-hexodiulosonate. This is 4-deoxy-L-threo-5-hexosulose-uronate ketol-isomerase from Shigella sonnei (strain Ss046).